Reading from the N-terminus, the 98-residue chain is Beta-elicitin DRE-beta (98 aa).

Disulfide bonds link Cys3/Cys71, Cys27/Cys56, and Cys51/Cys95.

The protein belongs to the elicitin family.

It localises to the secreted. In terms of biological role, induces local and distal defense responses (incompatible hypersensitive reaction) in plants from the solanaceae and cruciferae families. Elicits leaf necrosis and causes the accumulation of pathogenesis-related proteins. Might interact with the lipidic molecules of the plasma membrane. The chain is Beta-elicitin DRE-beta from Phytophthora drechsleri.